An 838-amino-acid chain; its full sequence is Lymphoid-specific helicase (838 aa).

A coiled-coil region spans residues 30–115; that stretch reads MLEEEEQLEA…SLKVKKGKNS (86 aa). Basic and acidic residues predominate over residues 94–108; sequence QKKKEKLERKKESLK. The tract at residues 94 to 135 is disordered; the sequence is QKKKEKLERKKESLKVKKGKNSIDASEEKPVMRKKRGREDES. The residue at position 115 (S115) is a Phosphoserine. The span at 119-134 shows a compositional bias: basic and acidic residues; the sequence is SEEKPVMRKKRGREDE. A Helicase ATP-binding domain is found at 235 to 403; sequence RMLWENGING…WSLLNFLLPD (169 aa). Residue 248–255 participates in ATP binding; the sequence is DEMGLGKT. The short motif at 354–357 is the DEAH box element; it reads DEGH. Residues S503 and S515 each carry the phosphoserine modification. Positions 603-767 constitute a Helicase C-terminal domain; sequence ILDRMLPELK…GLNLSKNFLD (165 aa).

Belongs to the SNF2/RAD54 helicase family. In terms of tissue distribution, highly expressed in proliferative tissues such as adult thymus and testis, and expressed at lower levels in uterus, small intestine, colon, and peripheral blood mononuclear cells. Also expressed in neoplastic cell lines including those derived from myeloid and lymphoid leukemias.

Its subcellular location is the nucleus. Functionally, plays an essential role in normal development and survival. Involved in regulation of the expansion or survival of lymphoid cells. Required for de novo or maintenance DNA methylation. May control silencing of the imprinted CDKN1C gene through DNA methylation. May play a role in formation and organization of heterochromatin, implying a functional role in the regulation of transcription and mitosis. In Homo sapiens (Human), this protein is Lymphoid-specific helicase.